Reading from the N-terminus, the 148-residue chain is MDTPNKDDSIIRFSVSLQQNLLDELDNRIIKNGYSSRSELVRDMIREKLVEDNWAEDNPNDESKIAVLVVIYDHHQRELNQRMIDIQHASGTHVLCTTHIHMDEHNCLETIILQGNSFEIQRLQLEIGGLRGVKFAKLTKASSFEHNE.

Ni(2+)-binding residues include H88, H99, H101, and C107.

This sequence belongs to the transcriptional regulatory CopG/NikR family. Ni(2+) is required as a cofactor.

Functionally, transcriptional regulator. The chain is Putative nickel-responsive regulator from Helicobacter pylori (strain G27).